The chain runs to 334 residues: Ornithine carbamoyltransferase (334 aa).

Carbamoyl phosphate is bound by residues 56–59, Q83, R107, and 134–137; these read STRT and HPTQ. Residues N168, D232, and 236–237 contribute to the L-ornithine site; that span reads SM. Carbamoyl phosphate-binding positions include 274 to 275 and R320; that span reads CL.

The protein belongs to the aspartate/ornithine carbamoyltransferase superfamily. OTCase family.

It is found in the cytoplasm. It carries out the reaction carbamoyl phosphate + L-ornithine = L-citrulline + phosphate + H(+). Its pathway is amino-acid biosynthesis; L-arginine biosynthesis; L-arginine from L-ornithine and carbamoyl phosphate: step 1/3. Functionally, reversibly catalyzes the transfer of the carbamoyl group from carbamoyl phosphate (CP) to the N(epsilon) atom of ornithine (ORN) to produce L-citrulline. In Shigella sonnei (strain Ss046), this protein is Ornithine carbamoyltransferase.